The sequence spans 536 residues: Butyrophilin-like protein 9 (536 aa).

An N-terminal signal peptide occupies residues 1 to 35 (MADFSVFLGFLKQIPRCLSIFFTYLLFLQLWEVNS). Ig-like V-type domains lie at 36–149 (DKVW…WELE) and 152–241 (GSGS…KEFV). Residues 36–257 (DKVWVLGPEE…FLPRMSPWKK (222 aa)) are Extracellular-facing. Cys59 and Cys133 are disulfide-bonded. 3 N-linked (GlcNAc...) asparagine glycosylation sites follow: Asn102, Asn139, and Asn224. Cys173 and Cys227 are joined by a disulfide. A helical transmembrane segment spans residues 258–278 (AFVGTLVVLPLSLIVLTMLAL). The Cytoplasmic segment spans residues 279-536 (RYFYKLRSFQ…PAWAVNEAVS (258 aa)). Positions 307 to 506 (DWRRSEGQAE…MTICSLPVRG (200 aa)) constitute a B30.2/SPRY domain.

Belongs to the immunoglobulin superfamily. BTN/MOG family.

It is found in the membrane. This Mus musculus (Mouse) protein is Butyrophilin-like protein 9 (Btnl9).